Reading from the N-terminus, the 222-residue chain is Protein-L-isoaspartate O-methyltransferase (222 aa).

Serine 69 is a catalytic residue.

Belongs to the methyltransferase superfamily. L-isoaspartyl/D-aspartyl protein methyltransferase family.

It localises to the cytoplasm. The catalysed reaction is [protein]-L-isoaspartate + S-adenosyl-L-methionine = [protein]-L-isoaspartate alpha-methyl ester + S-adenosyl-L-homocysteine. Functionally, catalyzes the methyl esterification of L-isoaspartyl residues in peptides and proteins that result from spontaneous decomposition of normal L-aspartyl and L-asparaginyl residues. It plays a role in the repair and/or degradation of damaged proteins. This is Protein-L-isoaspartate O-methyltransferase from Caulobacter vibrioides (strain NA1000 / CB15N) (Caulobacter crescentus).